The sequence spans 161 residues: Probable chemoreceptor glutamine deamidase CheD (161 aa).

Belongs to the CheD family.

The enzyme catalyses L-glutaminyl-[protein] + H2O = L-glutamyl-[protein] + NH4(+). Its function is as follows. Probably deamidates glutamine residues to glutamate on methyl-accepting chemotaxis receptors (MCPs), playing an important role in chemotaxis. The polypeptide is Probable chemoreceptor glutamine deamidase CheD (Syntrophomonas wolfei subsp. wolfei (strain DSM 2245B / Goettingen)).